A 405-amino-acid polypeptide reads, in one-letter code: Coiled-coil domain-containing protein 91 (405 aa).

The tract at residues 1 to 16 (MDDDDFGGFEAAETFD) is GGA1-binding motif. A disordered region spans residues 1–27 (MDDDDFGGFEAAETFDGGNGETQTTSP). A phosphoserine mark is found at serine 43 and serine 46. A coiled-coil region spans residues 126 to 376 (GANVSNIQLR…QKRLDQVIRQ (251 aa)). The segment at 210 to 377 (LSIIVDEYKH…KRLDQVIRQR (168 aa)) is homodimerization.

Homodimer. Interacts with GGA1, GGA2 and AP1G1.

The protein resides in the membrane. The protein localises to the golgi apparatus. It is found in the trans-Golgi network membrane. It localises to the trans-Golgi network. Involved in the regulation of membrane traffic through the trans-Golgi network (TGN). Functions in close cooperation with the GGAs in the sorting of hydrolases to lysosomes. In Pongo abelii (Sumatran orangutan), this protein is Coiled-coil domain-containing protein 91 (CCDC91).